Reading from the N-terminus, the 77-residue chain is uncharacterized protein (77 aa).

This is an uncharacterized protein from Vaccinia virus (strain Western Reserve) (VACV).